Consider the following 425-residue polypeptide: Serine--tRNA ligase (425 aa).

230–232 (TAE) contributes to the L-serine binding site. Residue 261 to 263 (RSE) participates in ATP binding. Glu-284 serves as a coordination point for L-serine. An ATP-binding site is contributed by 348 to 351 (EISS). Ser-384 is a binding site for L-serine.

The protein belongs to the class-II aminoacyl-tRNA synthetase family. Type-1 seryl-tRNA synthetase subfamily. In terms of assembly, homodimer. The tRNA molecule binds across the dimer.

The protein resides in the cytoplasm. It carries out the reaction tRNA(Ser) + L-serine + ATP = L-seryl-tRNA(Ser) + AMP + diphosphate + H(+). It catalyses the reaction tRNA(Sec) + L-serine + ATP = L-seryl-tRNA(Sec) + AMP + diphosphate + H(+). It participates in aminoacyl-tRNA biosynthesis; selenocysteinyl-tRNA(Sec) biosynthesis; L-seryl-tRNA(Sec) from L-serine and tRNA(Sec): step 1/1. Functionally, catalyzes the attachment of serine to tRNA(Ser). Is also able to aminoacylate tRNA(Sec) with serine, to form the misacylated tRNA L-seryl-tRNA(Sec), which will be further converted into selenocysteinyl-tRNA(Sec). The chain is Serine--tRNA ligase from Streptococcus pyogenes serotype M3 (strain SSI-1).